Consider the following 562-residue polypeptide: 4-coumarate--CoA ligase-like 9 (562 aa).

ATP-binding residues include Ser212, Ser213, Gly214, Thr215, Thr216, and Lys220. Residue Arg281 participates in CoA binding. Residues 283-352 (ELEAMFKAVE…QKFPDVDIVQ (70 aa)) form an SBD1 region. ATP contacts are provided by Gln352, Gly353, Thr357, Asp438, and Arg453. Residues 353 to 417 (GYGLTESSGP…LRGPVIMKGY (65 aa)) form an SBD2 region. 2 residues coordinate CoA: Lys461 and Ala462. Lys544 contacts ATP. Residues 560–562 (SKL) carry the Microbody targeting signal motif.

The protein belongs to the ATP-dependent AMP-binding enzyme family. Requires Mg(2+) as cofactor. Expressed at low level in leaves.

The protein resides in the peroxisome. It catalyses the reaction (9S,13S,15Z)-12-oxophyto-10,15-dienoate + ATP + CoA = (10Z,15Z)-12-oxophytodienoyl-CoA + AMP + diphosphate. It carries out the reaction hexadecanoate + ATP + CoA = hexadecanoyl-CoA + AMP + diphosphate. The catalysed reaction is (9Z)-octadecenoate + ATP + CoA = (9Z)-octadecenoyl-CoA + AMP + diphosphate. The enzyme catalyses octadecanoate + ATP + CoA = octadecanoyl-CoA + AMP + diphosphate. It catalyses the reaction tetradecanoate + ATP + CoA = tetradecanoyl-CoA + AMP + diphosphate. It carries out the reaction dodecanoate + ATP + CoA = dodecanoyl-CoA + AMP + diphosphate. The catalysed reaction is decanoate + ATP + CoA = decanoyl-CoA + AMP + diphosphate. The enzyme catalyses octanoate + ATP + CoA = octanoyl-CoA + AMP + diphosphate. It catalyses the reaction (9Z,12Z)-octadecadienoate + ATP + CoA = (9Z,12Z)-octadecadienoyl-CoA + AMP + diphosphate. It carries out the reaction (9Z,12Z,15Z)-octadecatrienoate + ATP + CoA = (9Z,12Z,15Z)-octadecatrienoyl-CoA + AMP + diphosphate. The catalysed reaction is nonanoate + ATP + CoA = nonanoyl-CoA + AMP + diphosphate. Its function is as follows. Contributes to jasmonic acid biosynthesis by initiating the beta-oxidative chain shortening of its precursors. Converts 12-oxo-phytodienoic acid (OPDA) into OPDA-CoA. Follows a two-step reaction mechanism, wherein the carboxylate substrate first undergoes adenylation by ATP, followed by a thioesterification in the presence of CoA to yield the final CoA thioester. The chain is 4-coumarate--CoA ligase-like 9 from Arabidopsis thaliana (Mouse-ear cress).